Reading from the N-terminus, the 160-residue chain is Glyoxalase domain-containing protein 5 (160 aa).

The VOC domain maps to 37 to 157; the sequence is RLDHIVMTVK…DRNLIEVSNY (121 aa).

Belongs to the glyoxalase I family.

The polypeptide is Glyoxalase domain-containing protein 5 (GLOD5) (Homo sapiens (Human)).